The primary structure comprises 655 residues: WD repeat-containing protein 70 (655 aa).

Disordered stretches follow at residues 1 to 24 and 43 to 170; these read MEHSGPSEVTGADTAGPDPQLAVT and FEQT…PIHR. Positions 45–78 are enriched in basic and acidic residues; sequence QTRRTAVERSRKTLEAREKEEEMNREKELRKQLE. Positions 99–112 are enriched in low complexity; sequence RDTSSSDSDHSSGS. Over residues 148-165 the composition is skewed to acidic residues; sequence EEGEDDDDDDLEDEGEED. 7 WD repeats span residues 181–220, 228–269, 282–322, 331–370, 377–416, 422–467, and 470–509; these read HGTKTVSALGLDPSGARLVTGGYDYDVKFWDFAGMDASFK, CECH…ECIK, GHTA…KQKS, GKKVIPTTCTYSRDGNLVAAACQNGSIQIWDRNLTVHPKF, APGTDTSCVAFSYDGNVLASRGGDDTLKLWDVRQFNKPLF, PTLF…RVYE, and ITDASVVRCLWHPKLNQIMVGTGNGLAKVYYDPNKSQRGA. Residue Lys297 forms a Glycyl lysine isopeptide (Lys-Gly) (interchain with G-Cter in SUMO2) linkage. An N6-acetyllysine modification is found at Lys453. Over residues 541–566 the composition is skewed to basic and acidic residues; that stretch reads REPRQRSTRKQLEKDRLDPLKSHKPE. The segment at 541–582 is disordered; it reads REPRQRSTRKQLEKDRLDPLKSHKPEPPVAGPGRGGRVGTHG. Residues 572–582 are compositionally biased toward gly residues; the sequence is PGRGGRVGTHG. Thr580 carries the post-translational modification Phosphothreonine. Glycyl lysine isopeptide (Lys-Gly) (interchain with G-Cter in SUMO2) cross-links involve residues Lys591 and Lys597. Ser622 and Ser639 each carry phosphoserine. The disordered stretch occupies residues 632-655; the sequence is TMFAQVESDDEESKNEPEWKKRKI. Basic and acidic residues predominate over residues 645–655; that stretch reads KNEPEWKKRKI.

It belongs to the WD repeat GAD-1 family.

The sequence is that of WD repeat-containing protein 70 (Wdr70) from Rattus norvegicus (Rat).